The sequence spans 74 residues: Metallothionein-like protein type 2 (74 aa).

Belongs to the metallothionein superfamily. Type 15 family.

In terms of biological role, metallothioneins have a high content of cysteine residues that bind various heavy metals. The chain is Metallothionein-like protein type 2 from Nicotiana plumbaginifolia (Leadwort-leaved tobacco).